Here is a 379-residue protein sequence, read N- to C-terminus: Cytochrome b (379 aa).

4 helical membrane-spanning segments follow: residues phenylalanine 33–methionine 53, tryptophan 77–isoleucine 98, tryptophan 113–leucine 133, and phenylalanine 178–leucine 198. Heme b is bound by residues histidine 83 and histidine 97. Heme b contacts are provided by histidine 182 and histidine 196. Histidine 201 provides a ligand contact to a ubiquinone. The next 4 helical transmembrane spans lie at threonine 226–phenylalanine 246, leucine 288–histidine 308, isoleucine 320–glycine 340, and phenylalanine 347–residue 367.

Belongs to the cytochrome b family. The cytochrome bc1 complex contains 11 subunits: 3 respiratory subunits (MT-CYB, CYC1 and UQCRFS1), 2 core proteins (UQCRC1 and UQCRC2) and 6 low-molecular weight proteins (UQCRH/QCR6, UQCRB/QCR7, UQCRQ/QCR8, UQCR10/QCR9, UQCR11/QCR10 and a cleavage product of UQCRFS1). This cytochrome bc1 complex then forms a dimer. Heme b is required as a cofactor.

The protein localises to the mitochondrion inner membrane. Functionally, component of the ubiquinol-cytochrome c reductase complex (complex III or cytochrome b-c1 complex) that is part of the mitochondrial respiratory chain. The b-c1 complex mediates electron transfer from ubiquinol to cytochrome c. Contributes to the generation of a proton gradient across the mitochondrial membrane that is then used for ATP synthesis. In Thomomys umbrinus (Southern pocket gopher), this protein is Cytochrome b (MT-CYB).